The sequence spans 325 residues: Delta(1)-pyrroline-2-carboxylate reductase (325 aa).

This sequence belongs to the ornithine cyclodeaminase/mu-crystallin family.

The catalysed reaction is L-proline + NAD(+) = 1-pyrroline-2-carboxylate + NADH + H(+). It carries out the reaction L-proline + NADP(+) = 1-pyrroline-2-carboxylate + NADPH + H(+). In terms of biological role, catalyzes the reduction of Delta(1)-pyrroline-2-carboxylate (Pyr2C) to L-proline, using preferentially NADPH over NADH as the electron donor. Is likely involved in a degradation pathway that converts trans-3-hydroxy-L-proline (t3LHyp) to L-proline. The sequence is that of Delta(1)-pyrroline-2-carboxylate reductase from Bacillus cereus (strain ATCC 10987 / NRS 248).